Consider the following 243-residue polypeptide: Uridylate kinase (243 aa).

Position 12–15 (12–15) interacts with ATP; sequence KLSG. Residue glycine 54 participates in UMP binding. Positions 55 and 59 each coordinate ATP. 135-142 contacts UMP; the sequence is TGNPYFTT. 3 residues coordinate ATP: asparagine 163, tyrosine 169, and aspartate 172.

It belongs to the UMP kinase family. In terms of assembly, homohexamer.

Its subcellular location is the cytoplasm. It catalyses the reaction UMP + ATP = UDP + ADP. It functions in the pathway pyrimidine metabolism; CTP biosynthesis via de novo pathway; UDP from UMP (UMPK route): step 1/1. With respect to regulation, inhibited by UTP. In terms of biological role, catalyzes the reversible phosphorylation of UMP to UDP. The chain is Uridylate kinase from Roseiflexus sp. (strain RS-1).